Reading from the N-terminus, the 764-residue chain is MRYILDIKMEIVQEILDQLYRKVLLGTTLEDDVHGYIFYLNPDLSEQDGCPAFPVAQSNASGVLDGMAGQHGPSSHEVATLPGAQECPKRQLQMDRTREMKLLQLTVIDTMLSQVLSDETETHAKEGYRELTEVLLQSVELDSKLMRMLQNSDKLLSHMAAKCLASLLYFQLREKVRSQHKMLSNSWVTFCQKHLSESSESGEAVRCLWILTAVIKEILKDTHSQRAESLKQLLTPFDITFEVFYNSLFSQHFGDFQSPSNLASSLMCFLELLELLVASRIHLKLHFRSQRMLFLKPHALDILAWPIPAFIKRKLVILVKKCLLCKVGEDLCREPAPSLMSPDHLLDSDMLTLADTLLHAVHVGLWKALAVSGKPSCFGGDEVQPGCRLRTGPDHVTLRAASLITVKSLEIKSQNCTSAAEMKVALQTFMSELLAFLKPHLQPSLQPHNPCEWLSRVFIEQDDDMLEAAKASLSIYLQLTREWDASASLTQEKEAWIRSTHGHGCNPHCVFLFFLKNVAFDSTVLLDFLISSETCFLEYFVKYLKLLQKDWAHFLSICKFFAAVESQCGMLVHDPVPSPARGRSTSLTVPHAPASPVGENTCPWLPWASDASSESQSQVMMPKETLPVPANGPPSRTPQSLVDYDSSEASEEETTSEHLANSKQTSLCQERSEEIQGLPRTWEEQKEHSLEPLLSAESSSPFSAKGRVAADGTVWQVGLFLRTVKCLEELQGAIYRLQEKNLFPYNPAALLKLLKGVEAKCVNV.

Disordered regions lie at residues 615-668 and 682-702; these read SQSQ…TSLC and WEEQ…SSPF. A compositionally biased stretch (acidic residues) spans 645-654; it reads DSSEASEEET. A Phosphoserine modification is found at serine 650. The span at 658–668 shows a compositional bias: polar residues; it reads HLANSKQTSLC. The span at 691–702 shows a compositional bias: low complexity; the sequence is EPLLSAESSSPF.

Belongs to the protein lines family.

The sequence is that of Protein Lines homolog 1 from Mus musculus (Mouse).